The chain runs to 450 residues: Phosphoglucosamine mutase (450 aa).

Residue Ser101 is the Phosphoserine intermediate of the active site. 4 residues coordinate Mg(2+): Ser101, Asp240, Asp242, and Asp244. A Phosphoserine modification is found at Ser101.

Belongs to the phosphohexose mutase family. Requires Mg(2+) as cofactor. Activated by phosphorylation.

The enzyme catalyses alpha-D-glucosamine 1-phosphate = D-glucosamine 6-phosphate. In terms of biological role, catalyzes the conversion of glucosamine-6-phosphate to glucosamine-1-phosphate. This is Phosphoglucosamine mutase from Streptococcus sanguinis (strain SK36).